A 197-amino-acid chain; its full sequence is Fe/S biogenesis protein NfuA (197 aa).

Residues Cys-155 and Cys-158 each contribute to the [4Fe-4S] cluster site.

The protein belongs to the NfuA family. As to quaternary structure, homodimer. It depends on [4Fe-4S] cluster as a cofactor.

In terms of biological role, involved in iron-sulfur cluster biogenesis. Binds a 4Fe-4S cluster, can transfer this cluster to apoproteins, and thereby intervenes in the maturation of Fe/S proteins. Could also act as a scaffold/chaperone for damaged Fe/S proteins. This chain is Fe/S biogenesis protein NfuA, found in Pseudomonas savastanoi pv. phaseolicola (strain 1448A / Race 6) (Pseudomonas syringae pv. phaseolicola (strain 1448A / Race 6)).